A 302-amino-acid chain; its full sequence is Fluoroacetate dehalogenase (302 aa).

Positions 32–270 (PPLLLLHGFP…LDVWRKWASD (239 aa)) constitute an AB hydrolase-1 domain. The active-site Nucleophile is the Asp110. Residues Arg111, Arg114, His155, Trp156, and Tyr219 each coordinate fluoroacetate. Catalysis depends on His280, which acts as the Proton acceptor.

This sequence belongs to the AB hydrolase superfamily. Epoxide hydrolase family. In terms of assembly, homodimer.

The enzyme catalyses a haloacetate + H2O = a halide anion + glycolate + H(+). It carries out the reaction fluoroacetate + H2O = fluoride + glycolate + H(+). The catalysed reaction is chloroacetate + H2O = glycolate + chloride + H(+). In terms of biological role, catalyzes the hydrolytic defluorination of fluoroacetate to produce glycolate. Has lower activity towards chloroacetate and bromoacetate. In Rhodopseudomonas palustris (strain ATCC BAA-98 / CGA009), this protein is Fluoroacetate dehalogenase.